The primary structure comprises 303 residues: UDP-3-O-acyl-N-acetylglucosamine deacetylase (303 aa).

Zn(2+)-binding residues include His78, His237, and Asp241. His264 (proton donor) is an active-site residue.

This sequence belongs to the LpxC family. Requires Zn(2+) as cofactor.

It carries out the reaction a UDP-3-O-[(3R)-3-hydroxyacyl]-N-acetyl-alpha-D-glucosamine + H2O = a UDP-3-O-[(3R)-3-hydroxyacyl]-alpha-D-glucosamine + acetate. Its pathway is glycolipid biosynthesis; lipid IV(A) biosynthesis; lipid IV(A) from (3R)-3-hydroxytetradecanoyl-[acyl-carrier-protein] and UDP-N-acetyl-alpha-D-glucosamine: step 2/6. In terms of biological role, catalyzes the hydrolysis of UDP-3-O-myristoyl-N-acetylglucosamine to form UDP-3-O-myristoylglucosamine and acetate, the committed step in lipid A biosynthesis. The chain is UDP-3-O-acyl-N-acetylglucosamine deacetylase from Cellvibrio japonicus (strain Ueda107) (Pseudomonas fluorescens subsp. cellulosa).